The primary structure comprises 429 residues: Formate-dependent phosphoribosylglycinamide formyltransferase (429 aa).

Residues 26–27 (EL) and glutamate 86 contribute to the N(1)-(5-phospho-beta-D-ribosyl)glycinamide site. Residues arginine 118, lysine 159, 199 to 202 (EEHI), and glutamate 207 each bind ATP. Positions 123–319 (ETLAREAKVP…EFGLHLRAVL (197 aa)) constitute an ATP-grasp domain. Residues glutamate 276 and glutamate 288 each contribute to the Mg(2+) site. Residues aspartate 295, lysine 375, and 382–383 (RR) contribute to the N(1)-(5-phospho-beta-D-ribosyl)glycinamide site.

It belongs to the PurK/PurT family. In terms of assembly, homodimer.

The catalysed reaction is N(1)-(5-phospho-beta-D-ribosyl)glycinamide + formate + ATP = N(2)-formyl-N(1)-(5-phospho-beta-D-ribosyl)glycinamide + ADP + phosphate + H(+). The protein operates within purine metabolism; IMP biosynthesis via de novo pathway; N(2)-formyl-N(1)-(5-phospho-D-ribosyl)glycinamide from N(1)-(5-phospho-D-ribosyl)glycinamide (formate route): step 1/1. Involved in the de novo purine biosynthesis. Catalyzes the transfer of formate to 5-phospho-ribosyl-glycinamide (GAR), producing 5-phospho-ribosyl-N-formylglycinamide (FGAR). Formate is provided by PurU via hydrolysis of 10-formyl-tetrahydrofolate. This Thermococcus kodakarensis (strain ATCC BAA-918 / JCM 12380 / KOD1) (Pyrococcus kodakaraensis (strain KOD1)) protein is Formate-dependent phosphoribosylglycinamide formyltransferase.